The chain runs to 194 residues: Thymidylate kinase (194 aa).

An ATP-binding site is contributed by 7-14 (GVDGVGKS).

The protein belongs to the thymidylate kinase family.

The enzyme catalyses dTMP + ATP = dTDP + ADP. Functionally, phosphorylation of dTMP to form dTDP in both de novo and salvage pathways of dTTP synthesis. The chain is Thymidylate kinase from Campylobacter curvus (strain 525.92).